The primary structure comprises 260 residues: DNA-directed RNA polymerase subunit Rpo3 (260 aa).

It belongs to the archaeal Rpo3/eukaryotic RPB3 RNA polymerase subunit family. In terms of assembly, part of the RNA polymerase complex.

The protein localises to the cytoplasm. It carries out the reaction RNA(n) + a ribonucleoside 5'-triphosphate = RNA(n+1) + diphosphate. In terms of biological role, DNA-dependent RNA polymerase (RNAP) catalyzes the transcription of DNA into RNA using the four ribonucleoside triphosphates as substrates. The sequence is that of DNA-directed RNA polymerase subunit Rpo3 from Pyrobaculum aerophilum (strain ATCC 51768 / DSM 7523 / JCM 9630 / CIP 104966 / NBRC 100827 / IM2).